The following is a 176-amino-acid chain: ATP-dependent protease subunit HslV (176 aa).

Thr-2 is a catalytic residue. Residues Gly-157, Cys-160, and Thr-163 each coordinate Na(+).

Belongs to the peptidase T1B family. HslV subfamily. A double ring-shaped homohexamer of HslV is capped on each side by a ring-shaped HslU homohexamer. The assembly of the HslU/HslV complex is dependent on binding of ATP.

The protein resides in the cytoplasm. It carries out the reaction ATP-dependent cleavage of peptide bonds with broad specificity.. Its activity is regulated as follows. Allosterically activated by HslU binding. Protease subunit of a proteasome-like degradation complex believed to be a general protein degrading machinery. In Klebsiella pneumoniae (strain 342), this protein is ATP-dependent protease subunit HslV.